A 320-amino-acid chain; its full sequence is Putative thiosulfate sulfurtransferase (320 aa).

An N-terminal signal peptide occupies residues 1–37; sequence MSVRSLRWPRQKAFLAVISLVVAVLLAVPGWLTPATA. 2 Rhodanese domains span residues 56–166 and 194–315; these read NNKQ…PVTK and LTGK…PVET. Cys-274 acts as the Cysteine persulfide intermediate in catalysis.

It localises to the periplasm. It catalyses the reaction thiosulfate + hydrogen cyanide = thiocyanate + sulfite + 2 H(+). May be a sulfotransferase involved in the transport of sulfate. Displays very low rhodanese activity. The chain is Putative thiosulfate sulfurtransferase (rhdA) from Synechococcus elongatus (strain ATCC 33912 / PCC 7942 / FACHB-805) (Anacystis nidulans R2).